The primary structure comprises 37 residues: Large ribosomal subunit protein bL36A (37 aa).

This sequence belongs to the bacterial ribosomal protein bL36 family.

This Methylobacillus flagellatus (strain ATCC 51484 / DSM 6875 / VKM B-1610 / KT) protein is Large ribosomal subunit protein bL36A.